The sequence spans 130 residues: Small ribosomal subunit protein uS11c (130 aa).

This sequence belongs to the universal ribosomal protein uS11 family. As to quaternary structure, part of the 30S ribosomal subunit.

The protein localises to the plastid. The protein resides in the chloroplast. This is Small ribosomal subunit protein uS11c from Tetradesmus obliquus (Green alga).